We begin with the raw amino-acid sequence, 322 residues long: Probable 5-dehydro-4-deoxyglucarate dehydratase 2 (322 aa).

This sequence belongs to the DapA family.

The enzyme catalyses 5-dehydro-4-deoxy-D-glucarate + H(+) = 2,5-dioxopentanoate + CO2 + H2O. Its pathway is carbohydrate acid metabolism; D-glucarate degradation; 2,5-dioxopentanoate from D-glucarate: step 2/2. The chain is Probable 5-dehydro-4-deoxyglucarate dehydratase 2 from Streptomyces coelicolor (strain ATCC BAA-471 / A3(2) / M145).